The sequence spans 189 residues: Peptidyl-tRNA hydrolase (189 aa).

Position 14 (Tyr14) interacts with tRNA. The active-site Proton acceptor is the His19. TRNA is bound by residues Tyr64, Asn66, and Asn112.

This sequence belongs to the PTH family. In terms of assembly, monomer.

It is found in the cytoplasm. It carries out the reaction an N-acyl-L-alpha-aminoacyl-tRNA + H2O = an N-acyl-L-amino acid + a tRNA + H(+). Its function is as follows. Hydrolyzes ribosome-free peptidyl-tRNAs (with 1 or more amino acids incorporated), which drop off the ribosome during protein synthesis, or as a result of ribosome stalling. Catalyzes the release of premature peptidyl moieties from peptidyl-tRNA molecules trapped in stalled 50S ribosomal subunits, and thus maintains levels of free tRNAs and 50S ribosomes. This Dehalococcoides mccartyi (strain ATCC BAA-2100 / JCM 16839 / KCTC 5957 / BAV1) protein is Peptidyl-tRNA hydrolase.